The primary structure comprises 271 residues: Urease accessory protein UreD (271 aa).

Belongs to the UreD family. As to quaternary structure, ureD, UreF and UreG form a complex that acts as a GTP-hydrolysis-dependent molecular chaperone, activating the urease apoprotein by helping to assemble the nickel containing metallocenter of UreC. The UreE protein probably delivers the nickel.

It is found in the cytoplasm. Its function is as follows. Required for maturation of urease via the functional incorporation of the urease nickel metallocenter. The sequence is that of Urease accessory protein UreD from Haemophilus influenzae (strain 86-028NP).